Here is a 164-residue protein sequence, read N- to C-terminus: Translocator protein homolog (164 aa).

5 helical membrane passes run tryptophan 16–lysine 34, serine 52–alanine 72, isoleucine 89–tyrosine 106, lysine 112–tryptophan 132, and lysine 141–leucine 163.

This sequence belongs to the TspO/BZRP family.

The protein localises to the mitochondrion membrane. In terms of biological role, may play a role in the transport of porphyrins and heme. This Schizosaccharomyces pombe (strain 972 / ATCC 24843) (Fission yeast) protein is Translocator protein homolog.